The primary structure comprises 165 residues: Copper-resistant cuproprotein CopI (165 aa).

Residues 1-23 form the signal peptide; the sequence is MKNRILRPALLCVAALFATTAQA. Residues 25–42 are compositionally biased toward basic and acidic residues; that stretch reads AGHDHGSAHAGAHAHDAD. Residues 25 to 50 form a disordered region; that stretch reads AGHDHGSAHAGAHAHDADTPYGRPGD. Residues His93, Cys148, His153, and Met158 each contribute to the Cu(2+) site.

It belongs to the CopI family. As to quaternary structure, monomer.

The protein localises to the periplasm. Functionally, involved in copper tolerance. Required for copper resistance under both aerobic and anaerobic photosynthetic growth conditions. Binds copper. Could be an important defense against copper in the periplasm and may protect not only c type cytochromes but also other proteins with cysteine residues from copper ions that may catalyze nonnative disulfide bond formation. The chain is Copper-resistant cuproprotein CopI from Rubrivivax gelatinosus (Rhodocyclus gelatinosus).